Consider the following 69-residue polypeptide: Cytochrome c oxidase subunit 8A, mitochondrial (69 aa).

The N-terminal 25 residues, 1-25 (MSVLTPLLLRGLTGSARRLPVPCAR), are a transit peptide targeting the mitochondrion. An SIFI-degron motif is present at residues 2–19 (SVLTPLLLRGLTGSARRL). Residues 26-36 (VHSKPPREQLG) lie on the Mitochondrial matrix side of the membrane. A helical membrane pass occupies residues 37–60 (TMDIAIGLTSCFVCFLLPSGWVLS). Topologically, residues 61–69 (HLENYKKRE) are mitochondrial intermembrane.

Belongs to the cytochrome c oxidase VIII family. As to quaternary structure, component of the cytochrome c oxidase (complex IV, CIV), a multisubunit enzyme composed of 14 subunits. The complex is composed of a catalytic core of 3 subunits MT-CO1, MT-CO2 and MT-CO3, encoded in the mitochondrial DNA, and 11 supernumerary subunits COX4I, COX5A, COX5B, COX6A, COX6B, COX6C, COX7A, COX7B, COX7C, COX8 and NDUFA4, which are encoded in the nuclear genome. The complex exists as a monomer or a dimer and forms supercomplexes (SCs) in the inner mitochondrial membrane with NADH-ubiquinone oxidoreductase (complex I, CI) and ubiquinol-cytochrome c oxidoreductase (cytochrome b-c1 complex, complex III, CIII), resulting in different assemblies (supercomplex SCI(1)III(2)IV(1) and megacomplex MCI(2)III(2)IV(2)). In response to mitochondrial stress, the precursor protein is ubiquitinated by the SIFI complex in the cytoplasm before mitochondrial import, leading to its degradation. Within the SIFI complex, UBR4 initiates ubiquitin chain that are further elongated or branched by KCMF1.

The protein resides in the mitochondrion inner membrane. The protein operates within energy metabolism; oxidative phosphorylation. In terms of biological role, component of the cytochrome c oxidase, the last enzyme in the mitochondrial electron transport chain which drives oxidative phosphorylation. The respiratory chain contains 3 multisubunit complexes succinate dehydrogenase (complex II, CII), ubiquinol-cytochrome c oxidoreductase (cytochrome b-c1 complex, complex III, CIII) and cytochrome c oxidase (complex IV, CIV), that cooperate to transfer electrons derived from NADH and succinate to molecular oxygen, creating an electrochemical gradient over the inner membrane that drives transmembrane transport and the ATP synthase. Cytochrome c oxidase is the component of the respiratory chain that catalyzes the reduction of oxygen to water. Electrons originating from reduced cytochrome c in the intermembrane space (IMS) are transferred via the dinuclear copper A center (CU(A)) of subunit 2 and heme A of subunit 1 to the active site in subunit 1, a binuclear center (BNC) formed by heme A3 and copper B (CU(B)). The BNC reduces molecular oxygen to 2 water molecules using 4 electrons from cytochrome c in the IMS and 4 protons from the mitochondrial matrix. This chain is Cytochrome c oxidase subunit 8A, mitochondrial (COX8A), found in Otolemur crassicaudatus (Brown greater galago).